A 261-amino-acid chain; its full sequence is uncharacterized protein (261 aa).

Belongs to the FrhB family.

This is an uncharacterized protein from Methanocaldococcus jannaschii (strain ATCC 43067 / DSM 2661 / JAL-1 / JCM 10045 / NBRC 100440) (Methanococcus jannaschii).